The primary structure comprises 266 residues: Orotidine 5'-phosphate decarboxylase (266 aa).

Substrate-binding positions include aspartate 38, 60–62 (KTH), 92–101 (DRKFADIGNT), tyrosine 218, and arginine 236. Catalysis depends on lysine 94, which acts as the Proton donor.

It belongs to the OMP decarboxylase family.

The enzyme catalyses orotidine 5'-phosphate + H(+) = UMP + CO2. It participates in pyrimidine metabolism; UMP biosynthesis via de novo pathway; UMP from orotate: step 2/2. In Candida maltosa (Yeast), this protein is Orotidine 5'-phosphate decarboxylase (URA3).